The primary structure comprises 430 residues: MDHRLLSFISAPLPSLIASLARHGGFGAWFVGGCVRDALLARPSNDIDIVVGPGGEDLPRAVAARIGGSFFPLDEERGHARVVLKGEGASCDFAPLQGGTIAADLALRDFTINALAVSCGSDDLLDPLGGAADLAQRVIRACSAGAFAADPLRIVRAYRFAAHLDFEIHAATLALIPDHAPLLATVAGERIRDELFRMLDLPHAVPYVLKMSCAGVTGAIFGADDLPADTAAGALDRVESLCRDLSAFGTEAEPVRARLRQEVQPGITIRALAKLAAFLNGAGIPAGIASQRLMLGKAATRLLELLCSSARLTWPAPAAAPDPHALFTLFCHREPAGCEQLILPLAEGILPEDRCRHLAAYLTRQHIPRGGRLLLTGDDIMILLGLPPGRQVGEAIELLRAAQSTGEVRTRAEAQRYLAKKQLTTPEPLR.

Residue 33–36 (GCVR) participates in CTP binding. Mg(2+) contacts are provided by aspartate 46 and aspartate 48. Residues 108–109 (RD), asparagine 113, 150–159 (DPLRIVRAYR), and arginine 190 each bind CTP.

Belongs to the tRNA nucleotidyltransferase/poly(A) polymerase family. Mg(2+) serves as cofactor.

It carries out the reaction a tRNA precursor + 2 CTP = a tRNA with a 3' CC end + 2 diphosphate. In terms of biological role, tRNA nucleotidyltransferase involved in the synthesis of the tRNA CCA terminus. Adds the two cytidine residues to tRNA. In Geobacter sulfurreducens (strain ATCC 51573 / DSM 12127 / PCA), this protein is CC-adding tRNA nucleotidyltransferase.